Reading from the N-terminus, the 187-residue chain is Elongation factor P (187 aa).

It belongs to the elongation factor P family.

The protein resides in the cytoplasm. The protein operates within protein biosynthesis; polypeptide chain elongation. Functionally, involved in peptide bond synthesis. Stimulates efficient translation and peptide-bond synthesis on native or reconstituted 70S ribosomes in vitro. Probably functions indirectly by altering the affinity of the ribosome for aminoacyl-tRNA, thus increasing their reactivity as acceptors for peptidyl transferase. In Nocardia farcinica (strain IFM 10152), this protein is Elongation factor P.